A 345-amino-acid chain; its full sequence is 2-oxoglutarate-dependent ethylene/succinate-forming enzyme (345 aa).

Positions 167-288 constitute a Fe2OG dioxygenase domain; it reads GWHHMRVLRF…RFAMAYFHEP (122 aa). Fe cation contacts are provided by His191 and His270.

It belongs to the iron/ascorbate-dependent oxidoreductase family. Monomer. Fe(2+) is required as a cofactor.

It carries out the reaction 2-oxoglutarate + O2 + 2 H(+) = ethene + 3 CO2 + H2O. The catalysed reaction is L-arginine + 2-oxoglutarate + O2 = guanidine + L-glutamate 5-semialdehyde + succinate + CO2. Its pathway is alkene biosynthesis; ethylene biosynthesis via 2-oxoglutarate. Its function is as follows. Simultaneously catalyzes two reactions, namely formation of ethylene and of succinate from 2-oxoglutarate. This is 2-oxoglutarate-dependent ethylene/succinate-forming enzyme (efe) from Ralstonia nicotianae (strain ATCC BAA-1114 / GMI1000) (Ralstonia solanacearum).